The following is a 64-amino-acid chain: DNA gyrase inhibitor YacG (64 aa).

Positions 9, 12, 28, and 32 each coordinate Zn(2+). Positions 45–64 are disordered; the sequence is KRIPSAGDLSDSDDWSEQQP. The span at 54–64 shows a compositional bias: acidic residues; sequence SDSDDWSEQQP.

Belongs to the DNA gyrase inhibitor YacG family. As to quaternary structure, interacts with GyrB. Requires Zn(2+) as cofactor.

Its function is as follows. Inhibits all the catalytic activities of DNA gyrase by preventing its interaction with DNA. Acts by binding directly to the C-terminal domain of GyrB, which probably disrupts DNA binding by the gyrase. The chain is DNA gyrase inhibitor YacG from Klebsiella pneumoniae (strain 342).